The primary structure comprises 389 residues: SH2 domain-containing protein 2A (389 aa).

The disordered stretch occupies residues 41 to 63 (AASPQAPEAASNTGNAERAEEVP). Residues 95–186 (WFHGFITRRE…PYGETLTEPL (92 aa)) form the SH2 domain. The tract at residues 190–295 (TPEPAGLSLR…PIAFYAMGRG (106 aa)) is disordered. Over residues 203-216 (SNFGSKSQDPNPQY) the composition is skewed to polar residues. Residue Ser-217 is modified to Phosphoserine. 2 consecutive short sequence motifs (SH3-binding) follow at residues 244–250 (RPKPPIP) and 272–278 (RPKPSNP). Positions 245 to 256 (PKPPIPAKPQLP) are enriched in pro residues. Ser-296 carries the post-translational modification Phosphoserine. The tract at residues 324 to 389 (KSWSRPVPGG…QAWLPLGPPQ (66 aa)) is disordered. The segment covering 337 to 348 (GGSQLHSENSVI) has biased composition (polar residues). Residues 352–361 (PPLPHQPPPA) are compositionally biased toward pro residues.

Interacts with KDR. Interacts with TXK and ITK. Phosphorylated on tyrosine residues. Expression limited to tissues of the immune system and, in particular, activated T-cells. Expressed in peripheral blood leukocytes, thymus and spleen. Much lower expression or undetectable, in brain, placenta, skeletal muscle, prostate, testis, ovary, small intestine, and colon. Expressed at low levels in unstimulated T-cells, but not expressed in normal resting or activated B-cells. According to PubMed:10692392, expression is not restricted to activated T-cells, but strongly expressed in blood cell lineages, the endothelium and other cell and tissue types, such as heart, lung, and liver.

The protein resides in the cytoplasm. Could be a T-cell-specific adapter protein involved in the control of T-cell activation. May play a role in the CD4-p56-LCK-dependent signal transduction pathway. Could also play an important role in normal and pathological angiogenesis. Could be an adapter protein that facilitates and regulates interaction of KDR with effector proteins important to endothelial cell survival and proliferation. This Homo sapiens (Human) protein is SH2 domain-containing protein 2A (SH2D2A).